Here is a 358-residue protein sequence, read N- to C-terminus: Peptide chain release factor 1 (358 aa).

Gln-233 is subject to N5-methylglutamine. A compositionally biased stretch (basic and acidic residues) spans 282–306 (QRAASERSADRRGQVGSGDRSERVR). The tract at residues 282 to 308 (QRAASERSADRRGQVGSGDRSERVRTY) is disordered.

Belongs to the prokaryotic/mitochondrial release factor family. Methylated by PrmC. Methylation increases the termination efficiency of RF1.

Its subcellular location is the cytoplasm. Functionally, peptide chain release factor 1 directs the termination of translation in response to the peptide chain termination codons UAG and UAA. This Afipia carboxidovorans (strain ATCC 49405 / DSM 1227 / KCTC 32145 / OM5) (Oligotropha carboxidovorans) protein is Peptide chain release factor 1.